A 616-amino-acid polypeptide reads, in one-letter code: Dihydroxy-acid dehydratase (616 aa).

Asp81 is a binding site for Mg(2+). A [2Fe-2S] cluster-binding site is contributed by Cys122. The Mg(2+) site is built by Asp123 and Lys124. Lys124 is subject to N6-carboxylysine. Residue Cys196 coordinates [2Fe-2S] cluster. Glu496 lines the Mg(2+) pocket. Ser522 serves as the catalytic Proton acceptor.

It belongs to the IlvD/Edd family. Homodimer. It depends on [2Fe-2S] cluster as a cofactor. Mg(2+) serves as cofactor.

It carries out the reaction (2R)-2,3-dihydroxy-3-methylbutanoate = 3-methyl-2-oxobutanoate + H2O. It catalyses the reaction (2R,3R)-2,3-dihydroxy-3-methylpentanoate = (S)-3-methyl-2-oxopentanoate + H2O. Its pathway is amino-acid biosynthesis; L-isoleucine biosynthesis; L-isoleucine from 2-oxobutanoate: step 3/4. The protein operates within amino-acid biosynthesis; L-valine biosynthesis; L-valine from pyruvate: step 3/4. In terms of biological role, functions in the biosynthesis of branched-chain amino acids. Catalyzes the dehydration of (2R,3R)-2,3-dihydroxy-3-methylpentanoate (2,3-dihydroxy-3-methylvalerate) into 2-oxo-3-methylpentanoate (2-oxo-3-methylvalerate) and of (2R)-2,3-dihydroxy-3-methylbutanoate (2,3-dihydroxyisovalerate) into 2-oxo-3-methylbutanoate (2-oxoisovalerate), the penultimate precursor to L-isoleucine and L-valine, respectively. This is Dihydroxy-acid dehydratase from Streptomyces griseus subsp. griseus (strain JCM 4626 / CBS 651.72 / NBRC 13350 / KCC S-0626 / ISP 5235).